A 1487-amino-acid polypeptide reads, in one-letter code: Collagen alpha-1(II) chain (1487 aa).

Residues 1–25 form the signal peptide; it reads MIRLGAPQTLVLLTLLVAAVLRCQG. The propeptide at 26 to 181 is N-terminal propeptide; that stretch reads QDVQEAGSCV…PPGLGGNFAA (156 aa). In terms of domain architecture, VWFC spans 32–90; the sequence is GSCVQDGQRYNDKDVWKPEPCRICVCDTGTVLCDDIICEDVKDCLSPEIPFGECCPICP. Positions 97-1237 are disordered; sequence SGQPGPKGQK…PREKGPDPLQ (1141 aa). Basic and acidic residues-rich tracts occupy residues 105 to 116 and 133 to 154; these read QKGEPGDIKDIV and PRGD…RDGE. The span at 158–173 shows a compositional bias: pro residues; sequence PGNPGPPGPPGPPGPP. At lysine 190 the chain carries 5-hydroxylysine. Residue lysine 190 is glycosylated (O-linked (Gal...) hydroxylysine). A triple-helical region region spans residues 201-1214; it reads GPMGPMGPRG…PGPPGPPGPP (1014 aa). Pro residues predominate over residues 208-217; the sequence is PRGPPGPAGA. Positions 218–239 are enriched in low complexity; sequence PGPQGFQGNPGEPGEPGVSGPM. Positions 241–250 are enriched in pro residues; sequence PRGPPGPPGK. The span at 251 to 265 shows a compositional bias: basic and acidic residues; sequence PGDDGEAGKPGKAGE. A 5-hydroxylysine mark is found at lysine 287, lysine 299, and lysine 308. O-linked (Gal...) hydroxylysine glycans are attached at residues lysine 287, lysine 299, and lysine 308. 2 stretches are compositionally biased toward low complexity: residues 310-320 and 335-350; these read ESGSPGENGSP and TGPA…DGQP. Positions 360–369 are enriched in gly residues; it reads GPAGGPGFPG. Composition is skewed to low complexity over residues 370–382 and 391–431; these read APGA…PTGA and PRGE…AGAP. Residue lysine 374 is modified to 5-hydroxylysine. Lysine 374 carries O-linked (Gal...) hydroxylysine glycosylation. Over residues 433 to 442 the composition is skewed to pro residues; the sequence is FPGPRGPPGP. 2 positions are modified to 5-hydroxylysine: lysine 608 and lysine 620. Residues lysine 608 and lysine 620 are each glycosylated (O-linked (Gal...) hydroxylysine). Composition is skewed to low complexity over residues 622–631 and 656–667; these read LPGAPGLRGL and QGAPGPSGFQGL. 4-hydroxyproline occurs at positions 659 and 668. Proline 670 is modified (3-hydroxyproline). Residues proline 671 and proline 674 each carry the 4-hydroxyproline modification. Over residues 764–775 the composition is skewed to basic and acidic residues; sequence KGDRGDVGEKGP. Composition is skewed to low complexity over residues 833–848 and 877–913; these read AGFA…PGAK and PTGV…SNGN. Position 907 is a 3-hydroxyproline (proline 907). Proline 908, proline 914, and proline 920 each carry 4-hydroxyproline. Residues 1069 to 1079 show a composition bias toward pro residues; that stretch reads APGPPGSPGPA. A compositionally biased stretch (basic and acidic residues) spans 1115-1129; that stretch reads RGDKGEAGEPGERGL. Position 1130 is a 5-hydroxylysine (lysine 1130). A glycan (O-linked (Gal...) hydroxylysine) is linked at lysine 1130. Residue proline 1144 is modified to 3-hydroxyproline. Positions 1148–1157 are enriched in low complexity; it reads SGDQGASGPA. Proline 1181 carries the 4-hydroxyproline modification. 3-hydroxyproline is present on proline 1186. Proline 1187 bears the 4-hydroxyproline mark. The span at 1199–1216 shows a compositional bias: pro residues; sequence AGPPGNPGPPGPPGPPGP. The residue at position 1201 (proline 1201) is a 3-hydroxyproline. 2 positions are modified to 4-hydroxyproline: proline 1202 and proline 1205. Proline 1207 bears the 3-hydroxyproline mark. A 4-hydroxyproline mark is found at proline 1208 and proline 1211. At proline 1213 the chain carries 3-hydroxyproline. Proline 1214 carries the 4-hydroxyproline modification. The nonhelical region (C-terminal) stretch occupies residues 1215 to 1241; it reads GPGIDMSAFAGLGPREKGPDPLQYMRA. The Fibrillar collagen NC1 domain occupies 1253–1487; it reads AEVDATLKSL…GVDIGPVCFL (235 aa). 3 cysteine pairs are disulfide-bonded: cysteine 1283–cysteine 1315, cysteine 1323–cysteine 1485, and cysteine 1393–cysteine 1438. Ca(2+) is bound by residues aspartate 1301, asparagine 1303, glutamine 1304, cysteine 1306, and aspartate 1309. Asparagine 1388 carries an N-linked (GlcNAc...) asparagine glycan.

It belongs to the fibrillar collagen family. As to quaternary structure, homotrimers of alpha 1(II) chains. Post-translationally, the N-telopeptide is covalently linked to the helical COL2 region of alpha 1(IX), alpha 2(IX) and alpha 3(IX) chain. The C-telopeptide is covalently linked to an another site in the helical region of alpha 3(IX) COL2. In terms of processing, contains mostly 4-hydroxyproline. Prolines at the third position of the tripeptide repeating unit (G-X-P) are 4-hydroxylated in some or all of the chains. Contains 3-hydroxyproline at a few sites. This modification occurs on the first proline residue in the sequence motif Gly-Pro-Hyp, where Hyp is 4-hydroxyproline. Post-translationally, lysine residues at the third position of the tripeptide repeating unit (G-X-Y) are 5-hydroxylated in some or all of the chains. In terms of processing, O-glycosylated on hydroxylated lysine residues. The O-linked glycan consists of a Glc-Gal disaccharide. As to expression, isoform 2 is highly expressed in juvenile chondrocyte and low in fetal chondrocyte.

It is found in the secreted. It localises to the extracellular space. The protein resides in the extracellular matrix. Its function is as follows. Type II collagen is specific for cartilaginous tissues. It is essential for the normal embryonic development of the skeleton, for linear growth and for the ability of cartilage to resist compressive forces. The chain is Collagen alpha-1(II) chain from Homo sapiens (Human).